The chain runs to 963 residues: Glycine dehydrogenase (decarboxylating) (963 aa).

Lysine 710 carries the N6-(pyridoxal phosphate)lysine modification.

The protein belongs to the GcvP family. In terms of assembly, the glycine cleavage system is composed of four proteins: P, T, L and H. Pyridoxal 5'-phosphate serves as cofactor.

It carries out the reaction N(6)-[(R)-lipoyl]-L-lysyl-[glycine-cleavage complex H protein] + glycine + H(+) = N(6)-[(R)-S(8)-aminomethyldihydrolipoyl]-L-lysyl-[glycine-cleavage complex H protein] + CO2. In terms of biological role, the glycine cleavage system catalyzes the degradation of glycine. The P protein binds the alpha-amino group of glycine through its pyridoxal phosphate cofactor; CO(2) is released and the remaining methylamine moiety is then transferred to the lipoamide cofactor of the H protein. In Pseudoalteromonas translucida (strain TAC 125), this protein is Glycine dehydrogenase (decarboxylating).